Here is a 160-residue protein sequence, read N- to C-terminus: Cytochrome b6-f complex subunit 4 (160 aa).

A run of 3 helical transmembrane segments spans residues 36–56, 95–115, and 131–151; these read LLYI…GLAV, LLGV…PFLE, and TVFL…TLPI.

The protein belongs to the cytochrome b family. PetD subfamily. The 4 large subunits of the cytochrome b6-f complex are cytochrome b6, subunit IV (17 kDa polypeptide, petD), cytochrome f and the Rieske protein, while the 4 small subunits are petG, petL, petM and petN. The complex functions as a dimer.

The protein resides in the plastid. The protein localises to the chloroplast thylakoid membrane. Its function is as follows. Component of the cytochrome b6-f complex, which mediates electron transfer between photosystem II (PSII) and photosystem I (PSI), cyclic electron flow around PSI, and state transitions. The chain is Cytochrome b6-f complex subunit 4 from Spinacia oleracea (Spinach).